Here is a 119-residue protein sequence, read N- to C-terminus: MRIALIAHDKKKQEIIEFAKRNKEALEKYELLATGTTGKMISEETGLNIKRYLSGPYGGDQQIGGRIAEGTIGLVVFFRDPLTAQPHEPDVSALLRVCDVHNIPVVTNSGTADLIIKQF.

Residues 1 to 119 (MRIALIAHDK…GTADLIIKQF (119 aa)) form the MGS-like domain. Substrate contacts are provided by residues histidine 8, lysine 12, 34–37 (TGTT), and 54–55 (SG). Aspartate 60 acts as the Proton donor/acceptor in catalysis. Histidine 87 contributes to the substrate binding site.

The protein belongs to the methylglyoxal synthase family.

The catalysed reaction is dihydroxyacetone phosphate = methylglyoxal + phosphate. Its function is as follows. Catalyzes the formation of methylglyoxal from dihydroxyacetone phosphate. The chain is Methylglyoxal synthase from Clostridium botulinum (strain Eklund 17B / Type B).